Consider the following 551-residue polypeptide: Glucan 1,4-alpha-maltotetraohydrolase (551 aa).

A signal peptide spans 1–21 (MSHILRAAVLAAVLLPFPALA). Aspartate 22, glutamine 23, histidine 34, aspartate 37, and glutamate 38 together coordinate Ca(2+). 99-100 (YF) serves as a coordination point for substrate. Asparagine 137 serves as a coordination point for Ca(2+). Histidine 138 is a binding site for substrate. A disulfide bridge connects residues cysteine 161 and cysteine 171. Ca(2+) contacts are provided by aspartate 172 and aspartate 175. 177–181 (FIGGE) contacts substrate. Aspartate 183 is a Ca(2+) binding site. Residue arginine 212 coordinates substrate. Aspartate 214 acts as the Nucleophile in catalysis. Glycine 218 provides a ligand contact to Ca(2+). Cysteine 237 and cysteine 272 are oxidised to a cystine. Catalysis depends on glutamate 240, which acts as the Proton donor. Residues histidine 314 and glutamine 326 each contribute to the substrate site. The region spanning 449–551 (GGEGGLVNVN…AAGASTSGSF (103 aa)) is the CBM20 domain.

It belongs to the glycosyl hydrolase 13 family. As to quaternary structure, monomer. Ca(2+) serves as cofactor.

Its subcellular location is the secreted. It catalyses the reaction Hydrolysis of (1-&gt;4)-alpha-D-glucosidic linkages in amylaceous polysaccharides, to remove successive maltotetraose residues from the non-reducing chain ends.. It functions in the pathway glycan degradation; starch degradation. The sequence is that of Glucan 1,4-alpha-maltotetraohydrolase (mta) from Roseateles saccharophilus (Pseudomonas saccharophila).